A 379-amino-acid polypeptide reads, in one-letter code: Transcription factor bHLH122 (379 aa).

Residues 1–17 (MESEFQQHHFLLHDHQH) are compositionally biased toward basic and acidic residues. Residues 1–21 (MESEFQQHHFLLHDHQHQRPR) are disordered. Position 74 is a phosphoserine (Ser74). Disordered stretches follow at residues 79–98 (TFNS…EDED), 133–156 (SVSR…ARHN), and 190–286 (TSNT…MSLP). Residues 84 to 93 (GTEKKPPEVK) are compositionally biased toward basic and acidic residues. Over residues 190–200 (TSNTEASSLTP) the composition is skewed to polar residues. Phosphoserine occurs at positions 213 and 234. Over residues 235-261 (GGFNRSFGNEGSASSKLTALARTQSGG) the composition is skewed to polar residues. Positions 265–274 (YKTKDEDSAS) are enriched in basic and acidic residues. In terms of domain architecture, bHLH spans 310-360 (CATHPRSIAERVRRTKISERMRKLQDLVPNMDTQTNTADMLDLAVQYIKDL).

As to quaternary structure, homodimer.

It localises to the nucleus. The sequence is that of Transcription factor bHLH122 (BHLH122) from Arabidopsis thaliana (Mouse-ear cress).